Here is a 1043-residue protein sequence, read N- to C-terminus: Isoleucine--tRNA ligase (1043 aa).

Residues 49–59 (PFATGLPHYGH) carry the 'HIGH' region motif. The short motif at 592-596 (KMSKR) is the 'KMSKS' region element. Residue Lys595 coordinates ATP.

It belongs to the class-I aminoacyl-tRNA synthetase family. IleS type 2 subfamily. As to quaternary structure, monomer. It depends on Zn(2+) as a cofactor.

It localises to the cytoplasm. The enzyme catalyses tRNA(Ile) + L-isoleucine + ATP = L-isoleucyl-tRNA(Ile) + AMP + diphosphate. Its function is as follows. Catalyzes the attachment of isoleucine to tRNA(Ile). As IleRS can inadvertently accommodate and process structurally similar amino acids such as valine, to avoid such errors it has two additional distinct tRNA(Ile)-dependent editing activities. One activity is designated as 'pretransfer' editing and involves the hydrolysis of activated Val-AMP. The other activity is designated 'posttransfer' editing and involves deacylation of mischarged Val-tRNA(Ile). The sequence is that of Isoleucine--tRNA ligase from Chlamydia caviae (strain ATCC VR-813 / DSM 19441 / 03DC25 / GPIC) (Chlamydophila caviae).